A 382-amino-acid chain; its full sequence is D-galactonate dehydratase (382 aa).

A Mg(2+)-binding site is contributed by Asp-183. His-185 (proton donor) is an active-site residue. Mg(2+) is bound by residues Glu-209 and Glu-235. His-285 serves as the catalytic Proton acceptor.

This sequence belongs to the mandelate racemase/muconate lactonizing enzyme family. GalD subfamily. It depends on Mg(2+) as a cofactor.

The enzyme catalyses D-galactonate = 2-dehydro-3-deoxy-D-galactonate + H2O. It functions in the pathway carbohydrate acid metabolism; D-galactonate degradation; D-glyceraldehyde 3-phosphate and pyruvate from D-galactonate: step 1/3. In terms of biological role, catalyzes the dehydration of D-galactonate to 2-keto-3-deoxy-D-galactonate. The sequence is that of D-galactonate dehydratase from Cronobacter sakazakii (strain ATCC BAA-894) (Enterobacter sakazakii).